Consider the following 200-residue polypeptide: Recombination protein RecR (200 aa).

The C4-type zinc-finger motif lies at 60–75 (CVYCQALTEDDVCNIC). The region spanning 83–177 (TKLCIIESML…KISRIGFGVP (95 aa)) is the Toprim domain.

This sequence belongs to the RecR family.

Functionally, may play a role in DNA repair. It seems to be involved in an RecBC-independent recombinational process of DNA repair. It may act with RecF and RecO. This is Recombination protein RecR from Francisella tularensis subsp. tularensis (strain WY96-3418).